Consider the following 62-residue polypeptide: Large ribosomal subunit protein bL28 (62 aa).

The tract at residues 1–26 (MARKCYVTGKSPKSGNNRSHALNKTK) is disordered. Residues 11–20 (SPKSGNNRSH) show a composition bias toward polar residues.

This sequence belongs to the bacterial ribosomal protein bL28 family.

The chain is Large ribosomal subunit protein bL28 from Exiguobacterium sibiricum (strain DSM 17290 / CCUG 55495 / CIP 109462 / JCM 13490 / 255-15).